Reading from the N-terminus, the 413-residue chain is Serine hydroxymethyltransferase (413 aa).

(6S)-5,6,7,8-tetrahydrofolate contacts are provided by residues Leu-117 and Gly-121–Leu-123. An N6-(pyridoxal phosphate)lysine modification is found at Lys-226. Residue Ser-349 to Phe-351 coordinates (6S)-5,6,7,8-tetrahydrofolate.

The protein belongs to the SHMT family. Homodimer. Pyridoxal 5'-phosphate is required as a cofactor.

It localises to the cytoplasm. The enzyme catalyses (6R)-5,10-methylene-5,6,7,8-tetrahydrofolate + glycine + H2O = (6S)-5,6,7,8-tetrahydrofolate + L-serine. It functions in the pathway one-carbon metabolism; tetrahydrofolate interconversion. Its pathway is amino-acid biosynthesis; glycine biosynthesis; glycine from L-serine: step 1/1. Catalyzes the reversible interconversion of serine and glycine with tetrahydrofolate (THF) serving as the one-carbon carrier. This reaction serves as the major source of one-carbon groups required for the biosynthesis of purines, thymidylate, methionine, and other important biomolecules. Also exhibits THF-independent aldolase activity toward beta-hydroxyamino acids, producing glycine and aldehydes, via a retro-aldol mechanism. This chain is Serine hydroxymethyltransferase, found in Listeria innocua serovar 6a (strain ATCC BAA-680 / CLIP 11262).